The following is a 292-amino-acid chain: N-acetylneuraminate lyase (292 aa).

Aceneuramate is bound by residues Ser47 and Thr48. Residue Tyr136 is the Proton donor of the active site. The active-site Schiff-base intermediate with substrate is Lys164. Thr166, Gly188, Asp190, Glu191, and Ser207 together coordinate aceneuramate.

It belongs to the DapA family. NanA subfamily. Homotetramer.

The protein resides in the cytoplasm. The enzyme catalyses aceneuramate = aldehydo-N-acetyl-D-mannosamine + pyruvate. The protein operates within amino-sugar metabolism; N-acetylneuraminate degradation; D-fructose 6-phosphate from N-acetylneuraminate: step 1/5. Catalyzes the reversible aldol cleavage of N-acetylneuraminic acid (sialic acid; Neu5Ac) to form pyruvate and N-acetylmannosamine (ManNAc) via a Schiff base intermediate. The protein is N-acetylneuraminate lyase of Histophilus somni (strain 129Pt) (Haemophilus somnus).